Consider the following 142-residue polypeptide: Small ribosomal subunit protein uS11 (142 aa).

The tract at residues 1 to 21 (MPPKTRGAVRKPRRKDKKNIA) is disordered. A compositionally biased stretch (basic residues) spans 7–17 (GAVRKPRRKDK).

Belongs to the universal ribosomal protein uS11 family. As to quaternary structure, part of the 30S ribosomal subunit. Interacts with proteins S7 and S18. Binds to IF-3.

Its function is as follows. Located on the platform of the 30S subunit, it bridges several disparate RNA helices of the 16S rRNA. Forms part of the Shine-Dalgarno cleft in the 70S ribosome. In Paenarthrobacter aurescens (strain TC1), this protein is Small ribosomal subunit protein uS11.